The sequence spans 217 residues: MAPGSRTSLLLAFALLCLPWLQEAGAVQTVPLSRLFDHAMLQAHRAHQLAIDTYQEFEETYIPKDQKYSFLHDSQTSFCFSDSIPTPSNMEETQQKSNLELLRISLLLIESWLEPVRFLRSMFANNLVYDTSDSDDYHLLKDLEEGIQTLMGRLEDGSRRTGQILKQTYSKFDTNSHNHDALLKNYGLLYCFRKDMDKVETFLRMVQCRSVEGSCGF.

The N-terminal stretch at M1–A26 is a signal peptide. H44 lines the Zn(2+) pocket. A disulfide bridge links C79 with C191. Residue E200 participates in Zn(2+) binding. C208 and C215 are disulfide-bonded.

The protein belongs to the somatotropin/prolactin family. Can be found in a monomeric as well as dimeric form.

It localises to the secreted. Its function is as follows. Produced only during pregnancy and is involved in stimulating lactation, fetal growth and metabolism. Does not interact with GHR but only activates PRLR through zinc-induced dimerization. The sequence is that of Chorionic somatomammotropin hormone 1 (CSH1) from Homo sapiens (Human).